We begin with the raw amino-acid sequence, 158 residues long: D-aminoacyl-tRNA deacylase (158 aa).

The Gly-cisPro motif, important for rejection of L-amino acids signature appears at 138–139; sequence GP.

Belongs to the DTD family. In terms of assembly, homodimer.

The protein localises to the cytoplasm. It carries out the reaction glycyl-tRNA(Ala) + H2O = tRNA(Ala) + glycine + H(+). The catalysed reaction is a D-aminoacyl-tRNA + H2O = a tRNA + a D-alpha-amino acid + H(+). Its function is as follows. An aminoacyl-tRNA editing enzyme that deacylates mischarged D-aminoacyl-tRNAs. Hydrolyzes correctly charged, achiral, glycyl-tRNA(Gly). Deacylates mischarged endogenous and E.coli glycyl-tRNA(Ala), protecting cells against glycine mischarging by AlaRS. Acts via tRNA-based rather than protein-based catalysis; rejects L-amino acids rather than detecting D-amino acids in the active site. By recycling D-aminoacyl-tRNA to D-amino acids and free tRNA molecules, this enzyme counteracts the toxicity associated with the formation of D-aminoacyl-tRNA entities in vivo and helps enforce protein L-homochirality. The protein is D-aminoacyl-tRNA deacylase of Drosophila melanogaster (Fruit fly).